We begin with the raw amino-acid sequence, 22 residues long: C-type natriuretic peptide (22 aa).

The cysteines at positions 6 and 22 are disulfide-linked.

This sequence belongs to the natriuretic peptide family.

It localises to the secreted. Its function is as follows. Hormone which plays a role in endochondral ossification through regulation of cartilaginous growth plate chondrocytes proliferation and differentiation. May also be vasoactive and natriuretic. Specifically binds and stimulates the cGMP production of the NPR2 receptor. Binds the clearance receptor NPR3. This Gallus gallus (Chicken) protein is C-type natriuretic peptide (NPPC).